The sequence spans 179 residues: Adenine phosphoribosyltransferase (179 aa).

It belongs to the purine/pyrimidine phosphoribosyltransferase family. Homodimer.

Its subcellular location is the cytoplasm. It carries out the reaction AMP + diphosphate = 5-phospho-alpha-D-ribose 1-diphosphate + adenine. Its pathway is purine metabolism; AMP biosynthesis via salvage pathway; AMP from adenine: step 1/1. Catalyzes a salvage reaction resulting in the formation of AMP, that is energically less costly than de novo synthesis. This chain is Adenine phosphoribosyltransferase, found in Jannaschia sp. (strain CCS1).